Reading from the N-terminus, the 314-residue chain is RNA 2'-O-methyltransferase FBLL1 (314 aa).

The span at 1 to 59 (MKPAGGRGGWGWGGGKGGSKGGDTGSGTKGGFGARTRGSSGGGRGRGRGGGGGGGGGGG) shows a compositional bias: gly residues. The disordered stretch occupies residues 1–82 (MKPAGGRGGW…RRKKGITVSV (82 aa)). At Arg7 the chain carries Omega-N-methylarginine. Positions 64–77 (RGGPGKNKNRRKKG) are enriched in basic residues. Residues 166-167 (TT), 185-186 (EF), 210-211 (DA), and 230-233 (DVAQ) each bind S-adenosyl-L-methionine.

It belongs to the methyltransferase superfamily. Fibrillarin family. As to quaternary structure, component of a box C/D small nucleolar ribonucleoprotein (snoRNP) complex composed of FBLL1, SNU13/NHP2L1, NOP56 and NOP58 and a guide snoRNA which mediates 2'-hydroxyl ribose methylation in RNAs.

It is found in the nucleus. The protein resides in the nucleolus. It carries out the reaction a ribonucleotide in RNA + S-adenosyl-L-methionine = a 2'-O-methylribonucleotide in RNA + S-adenosyl-L-homocysteine + H(+). Functionally, S-adenosyl-L-methionine-dependent RNA methyltransferase that catalyzes 2'-hydroxyl ribose methylation in RNAs. Functions as part of box C/D small nucleolar ribonucleoprotein (snoRNP) complexes, where guide snoRNAs ensure methylation specificity through base pairing with RNA substrates. Exhibits broad substrate specificity, methylating multiple sites on ribosomal RNAs (rRNAs) and messenger RNAs (mRNAs) depending on the guide snoRNA incorporated in the complex. Specifically expressed in brain, it regulates the expression of GAP43 by stabilizing its mRNA through methylation and thereby plays an indirect role in neuronal differentiation. The polypeptide is RNA 2'-O-methyltransferase FBLL1 (Mus musculus (Mouse)).